Consider the following 136-residue polypeptide: Ribonuclease YqgF (136 aa).

It belongs to the YqgF nuclease family. In terms of assembly, monomer; also forms low amounts of dimers. Mn(2+) is required as a cofactor.

The protein resides in the cytoplasm. Functionally, has robust sequence-specific RNase activity, acting as a 5'-3' exo/endonuclease on ssRNA substrates with minimally 3 consecutive adenine bases. Has no detectable nuclease activity on dsRNA, dsDNA or Holliday junction DNA. This chain is Ribonuclease YqgF, found in Deinococcus radiodurans (strain ATCC 13939 / DSM 20539 / JCM 16871 / CCUG 27074 / LMG 4051 / NBRC 15346 / NCIMB 9279 / VKM B-1422 / R1).